The primary structure comprises 464 residues: Gamma-aminobutyric acid receptor subunit rho-3 (464 aa).

An N-terminal signal peptide occupies residues 1 to 15 (MVLAFWLAFFTYTWI). Residues 16–263 (TLMLDASAVK…LFINFVLRRH (248 aa)) lie on the Extracellular side of the membrane. Arginine 108 contributes to the 4-aminobutanoate binding site. An N-linked (GlcNAc...) asparagine glycan is attached at asparagine 123. Serine 172 contacts 4-aminobutanoate. An intrachain disulfide couples cysteine 181 to cysteine 195. The N-linked (GlcNAc...) asparagine glycan is linked to asparagine 194. Residue glutamate 200 coordinates 4-aminobutanoate. A helical membrane pass occupies residues 264–284 (IFFFVLQTYFPAMLMVMLSWV). Topologically, residues 285 to 296 (SFWIDRRAVPAR) are cytoplasmic. A helical membrane pass occupies residues 297-317 (VSLGITTVLTMSTIVTGVSAS). The Extracellular segment spans residues 318–328 (MPQVSYVKAVD). The helical transmembrane segment at 329-349 (VYMWVSSLFVFLSVIEYAAVN) threads the bilayer. Positions 344–445 (EYAAVNYLTT…NNHVIDTYSR (102 aa)) are interaction with SQSTM1. Residues 350–443 (YLTTVEEWKQ…LENNHVIDTY (94 aa)) are Cytoplasmic-facing. A helical membrane pass occupies residues 444–464 (SRIVFPVVYIIFNLFYWGIYV).

Belongs to the ligand-gated ion channel (TC 1.A.9) family. Gamma-aminobutyric acid receptor (TC 1.A.9.5) subfamily. GABRR3 sub-subfamily. Three rho subunits (rho-1/GBRR1, rho-2/GBRR2 and rho-3/GBRR3) coassemble either to form functional homopentamers or heteropentamers. Forms a ternary complex with SQSTM1 and PRKCZ. Expressed in retina.

It is found in the postsynaptic cell membrane. The protein resides in the cell membrane. The catalysed reaction is chloride(in) = chloride(out). With respect to regulation, activated by agonists in the following the potency order: muscimol &gt; TACP &gt; TACA &gt; thiomuscimol &gt; CAMP &gt; CACA, when forming a homopentamer. Inhibited by TPMPA, a rho-specific antagonist, when forming a homopentamer. Inhibited antagonists in the following the potency order: TAMP = TPMPA &gt; P4MPA = THIP &gt; 14AA &gt; 3-APA, when forming a homopentamer. Its function is as follows. Rho subunit of the pentameric ligand-gated chloride channels responsible for mediating the effects of gamma-aminobutyric acid (GABA), the major inhibitory neurotransmitter in the brain. Rho-containing GABA-gated chloride channels are a subclass of GABA(A) receptors (GABAARs) entirely composed of rho subunits, where GABA molecules bind at the rho intersubunit interfaces. When activated by GABA, rho-GABAARs selectively allow the flow of chloride anions across the cell membrane down their electrochemical gradient. This chain is Gamma-aminobutyric acid receptor subunit rho-3, found in Rattus norvegicus (Rat).